The primary structure comprises 197 residues: Casparian strip membrane protein 5 (197 aa).

At Met1–Gly34 the chain is on the cytoplasmic side. A helical transmembrane segment spans residues Val35–Ala55. At Thr56–Gln84 the chain is on the extracellular side. Residues Phe85 to Ile105 traverse the membrane as a helical segment. Residues Val106–Arg117 are Cytoplasmic-facing. The chain crosses the membrane as a helical span at residues Leu118–Ala138. Residues Ala139–Ala171 lie on the Extracellular side of the membrane. Residues Val172–Val192 traverse the membrane as a helical segment. Over Leu193–His197 the chain is Cytoplasmic.

This sequence belongs to the Casparian strip membrane proteins (CASP) family. In terms of assembly, homodimer and heterodimers.

The protein resides in the cell membrane. Regulates membrane-cell wall junctions and localized cell wall deposition. Required for establishment of the Casparian strip membrane domain (CSD) and the subsequent formation of Casparian strips, a cell wall modification of the root endodermis that determines an apoplastic barrier between the intraorganismal apoplasm and the extraorganismal apoplasm and prevents lateral diffusion. This chain is Casparian strip membrane protein 5, found in Lotus japonicus (Lotus corniculatus var. japonicus).